The sequence spans 238 residues: Probable transcriptional regulatory protein SPD_1725 (238 aa).

This sequence belongs to the TACO1 family. YeeN subfamily.

The protein localises to the cytoplasm. In Streptococcus pneumoniae serotype 2 (strain D39 / NCTC 7466), this protein is Probable transcriptional regulatory protein SPD_1725.